A 505-amino-acid polypeptide reads, in one-letter code: ATP synthase subunit alpha (505 aa).

ATP is bound at residue 169–176; the sequence is GDRQTGKT.

It belongs to the ATPase alpha/beta chains family. F-type ATPases have 2 components, CF(1) - the catalytic core - and CF(0) - the membrane proton channel. CF(1) has five subunits: alpha(3), beta(3), gamma(1), delta(1), epsilon(1). CF(0) has three main subunits: a(1), b(2) and c(9-12). The alpha and beta chains form an alternating ring which encloses part of the gamma chain. CF(1) is attached to CF(0) by a central stalk formed by the gamma and epsilon chains, while a peripheral stalk is formed by the delta and b chains.

It localises to the cell membrane. It carries out the reaction ATP + H2O + 4 H(+)(in) = ADP + phosphate + 5 H(+)(out). Its function is as follows. Produces ATP from ADP in the presence of a proton gradient across the membrane. The alpha chain is a regulatory subunit. This chain is ATP synthase subunit alpha, found in Alkaliphilus metalliredigens (strain QYMF).